The following is a 464-amino-acid chain: Mannose-1-phosphate guanylyltransferase (464 aa).

This sequence belongs to the mannose-6-phosphate isomerase type 2 family.

The catalysed reaction is alpha-D-mannose 1-phosphate + GTP + H(+) = GDP-alpha-D-mannose + diphosphate. Its pathway is nucleotide-sugar biosynthesis; GDP-alpha-D-mannose biosynthesis; GDP-alpha-D-mannose from alpha-D-mannose 1-phosphate (GTP route): step 1/1. It functions in the pathway bacterial outer membrane biogenesis; LPS O-antigen biosynthesis. Involved in GDP-mannose biosynthesis which serves as the activated sugar nucleotide precursor for mannose residues in cell surface polysaccharides. This enzyme participates in synthesis of the LPS O7 antigen. This is Mannose-1-phosphate guanylyltransferase (manC) from Escherichia coli.